The following is a 415-amino-acid chain: Probable carboxypeptidase ACLA_013260 (415 aa).

The signal sequence occupies residues methionine 1–alanine 17. N-linked (GlcNAc...) asparagine glycosylation occurs at asparagine 97. Aspartate 145 is a binding site for Zn(2+). Residue glutamate 177 is the Proton acceptor of the active site. Glutamate 178 provides a ligand contact to Zn(2+). N-linked (GlcNAc...) asparagine glycosylation occurs at asparagine 271.

Belongs to the peptidase M20A family. Requires Zn(2+) as cofactor.

Its subcellular location is the secreted. This is Probable carboxypeptidase ACLA_013260 from Aspergillus clavatus (strain ATCC 1007 / CBS 513.65 / DSM 816 / NCTC 3887 / NRRL 1 / QM 1276 / 107).